The sequence spans 230 residues: Methyltransferase aurB (230 aa).

It belongs to the methyltransferase superfamily.

It participates in polyketide biosynthesis. Its function is as follows. Methyltransferase; part of the gene cluster that mediates the biosynthesis of aurovertins, fungal polyketides that exhibit potent inhibition of adenosine triphosphate synthase. Tha biosynthesis starts with the HR-PKS aurA that selects propionate as the starter unit; synthesizes a hexa-ene chain through the repeated functions of the KR and DH domains in the first six iterations; selectively introduces three alpha-methyl substitutions at C4, C6, and C16 using the S-adensylmethionine-dependent cMET; and shuts off KR and DH in the last three iterations to afford a 1,3,5-triketo portion that can undergo intramolecular cyclization to yield the alpha-pyrone intermediate. AurE may act as a cyclase and enhances the rate of pyrone formation and product release of aurA. The methyltransferase aurB then methylates the C17 hydroxyl group. C17 methylation is required to initiate epoxidation by the downstream monooxygenase aurC. The monooxygenase aurC and the epoxide hydrolase aurD can iteratively transform the terminal triene portion of the methylated precursor into the dioxabicyclo[3.2.1]octane scaffold of aurovertin E. Epoxidation modifications of the precursor occur in two separate steps; bis-epoxidation of the two terminal olefins takes place first, followed by another epoxidation that occurs at C7-C8 after tetrahydrofuran formation. The O-acyltransferase aurG converts aurovertin E to aurovertin A. This Calcarisporium arbuscula (Dendryphion arbuscula) protein is Methyltransferase aurB.